A 158-amino-acid polypeptide reads, in one-letter code: Style cell-cycle inhibitor 1-B (158 aa).

Basic and acidic residues-rich tracts occupy residues 1-11 (MGSDKKTTEEK) and 22-47 (PRDEVKSKRQNIKGDEERRKEKDKSK). Residues 1 to 88 (MGSDKKTTEE…DKSKNKFEEL (88 aa)) form a disordered region. 2 stretches are compositionally biased toward basic residues: residues 48–58 (KEKHKSHKSKC) and 67–81 (GEKHKTKSHKHKDKS).

As to expression, specifically expressed in flowers pistils, especially in stigmas and styles. Barely detected in roots, stems, leaves, sepals, petals and stamen.

Its subcellular location is the nucleus. In terms of biological role, component of the auxin signaling transduction pathway that regulates cell proliferation and differentiation during flowers stigmas and styles development. Involved in the regulation of auxin-related genes. This chain is Style cell-cycle inhibitor 1-B, found in Nicotiana tabacum (Common tobacco).